We begin with the raw amino-acid sequence, 421 residues long: Probable dual-specificity RNA methyltransferase RlmN (421 aa).

The interval methionine 1 to valine 23 is disordered. Residue glutamate 127 is the Proton acceptor of the active site. Residues tyrosine 133–arginine 372 form the Radical SAM core domain. Cysteine 140 and cysteine 378 are disulfide-bonded. [4Fe-4S] cluster-binding residues include cysteine 147, cysteine 151, and cysteine 154. Residues glycine 202–glutamate 203, serine 236, serine 259–histidine 261, and asparagine 335 contribute to the S-adenosyl-L-methionine site. The active-site S-methylcysteine intermediate is cysteine 378. The disordered stretch occupies residues alanine 383–arginine 421. A compositionally biased stretch (basic and acidic residues) spans glycine 387–glutamate 396.

The protein belongs to the radical SAM superfamily. RlmN family. It depends on [4Fe-4S] cluster as a cofactor.

It is found in the cytoplasm. It catalyses the reaction adenosine(2503) in 23S rRNA + 2 reduced [2Fe-2S]-[ferredoxin] + 2 S-adenosyl-L-methionine = 2-methyladenosine(2503) in 23S rRNA + 5'-deoxyadenosine + L-methionine + 2 oxidized [2Fe-2S]-[ferredoxin] + S-adenosyl-L-homocysteine. It carries out the reaction adenosine(37) in tRNA + 2 reduced [2Fe-2S]-[ferredoxin] + 2 S-adenosyl-L-methionine = 2-methyladenosine(37) in tRNA + 5'-deoxyadenosine + L-methionine + 2 oxidized [2Fe-2S]-[ferredoxin] + S-adenosyl-L-homocysteine. Its function is as follows. Specifically methylates position 2 of adenine 2503 in 23S rRNA and position 2 of adenine 37 in tRNAs. This Frankia casuarinae (strain DSM 45818 / CECT 9043 / HFP020203 / CcI3) protein is Probable dual-specificity RNA methyltransferase RlmN.